Reading from the N-terminus, the 881-residue chain is EEF1AKMT4-ECE2 readthrough transcript protein (881 aa).

A methyltransferase-like region region spans residues 1 to 160 (MASPRTPVSP…VHTVDQVLSE (160 aa)). The Cytoplasmic segment spans residues 1 to 178 (MASPRTPVSP…QLFGSHTQLE (178 aa)). 2 residues coordinate S-adenosyl-L-methionine: tryptophan 26 and tyrosine 30. Phosphotyrosine is present on tyrosine 39. S-adenosyl-L-methionine-binding positions include tryptophan 41, glycine 66, 88-89 (DY), 113-114 (DV), and lysine 130. Histidine 174 carries the phosphoserine modification. The helical; Signal-anchor for type II membrane protein transmembrane segment at 179-199 (LVLAGLILVLAALLLGCLVAL) threads the bilayer. At 200–881 (WVHRDPAHST…MNPGQLCEVW (682 aa)) the chain is on the lumenal side. The 673-residue stretch at 209-881 (TCVTEACIRV…MNPGQLCEVW (673 aa)) folds into the Peptidase M13 domain. Cystine bridges form between cysteine 210–cysteine 215, cysteine 233–cysteine 866, cysteine 241–cysteine 826, cysteine 297–cysteine 546, and cysteine 755–cysteine 878. N-linked (GlcNAc...) asparagine glycans are attached at residues asparagine 277, asparagine 281, asparagine 322, asparagine 382, asparagine 427, asparagine 494, and asparagine 650. Histidine 718 lines the Zn(2+) pocket. Glutamate 719 is a catalytic residue. Histidine 722 serves as a coordination point for Zn(2+). Asparagine 743 and asparagine 751 each carry an N-linked (GlcNAc...) asparagine glycan. Residue glutamate 778 coordinates Zn(2+). The active-site Proton donor is aspartate 782.

This sequence in the N-terminal section; belongs to the methyltransferase superfamily. In the C-terminal section; belongs to the peptidase M13 family. The cofactor is Zn(2+). As to expression, expressed at high levels in central nervous system. Expressed in adrenal glands, ovary and uterus, and at low levels in heart.

It is found in the golgi apparatus membrane. The protein localises to the cytoplasmic vesicle. It localises to the secretory vesicle membrane. It catalyses the reaction Hydrolysis of the 21-Trp-|-Val-22 bond in big endothelin to form endothelin 1.. Its activity is regulated as follows. Inhibited by phosphoramidon. Functionally, converts big endothelin-1 to endothelin-1. May also have methyltransferase activity. May play a role in amyloid-beta processing. In Mus musculus (Mouse), this protein is EEF1AKMT4-ECE2 readthrough transcript protein.